A 194-amino-acid chain; its full sequence is Putative manganese efflux pump MntP (194 aa).

The next 6 helical transmembrane spans lie at 2–22 (ISII…AFAV), 43–63 (LWFG…ASTF), 67–87 (VTQF…GNMV), 111–131 (PLAV…AFMF), 137–157 (AFAI…GLHI), and 174–194 (GVVL…VIAF).

It belongs to the MntP (TC 9.B.29) family.

The protein localises to the cell membrane. Probably functions as a manganese efflux pump. The polypeptide is Putative manganese efflux pump MntP (Bifidobacterium longum (strain DJO10A)).